Here is a 41-residue protein sequence, read N- to C-terminus: Photosystem I reaction center subunit IX (41 aa).

A helical membrane pass occupies residues Y7–I27.

Belongs to the PsaJ family.

The protein localises to the cellular thylakoid membrane. In terms of biological role, may help in the organization of the PsaE and PsaF subunits. The protein is Photosystem I reaction center subunit IX of Synechococcus sp. (strain ATCC 27144 / PCC 6301 / SAUG 1402/1) (Anacystis nidulans).